The chain runs to 278 residues: Tryptophan synthase alpha chain (278 aa).

Catalysis depends on proton acceptor residues E61 and D72.

Belongs to the TrpA family. As to quaternary structure, tetramer of two alpha and two beta chains.

The enzyme catalyses (1S,2R)-1-C-(indol-3-yl)glycerol 3-phosphate + L-serine = D-glyceraldehyde 3-phosphate + L-tryptophan + H2O. The protein operates within amino-acid biosynthesis; L-tryptophan biosynthesis; L-tryptophan from chorismate: step 5/5. The alpha subunit is responsible for the aldol cleavage of indoleglycerol phosphate to indole and glyceraldehyde 3-phosphate. The protein is Tryptophan synthase alpha chain of Shewanella oneidensis (strain ATCC 700550 / JCM 31522 / CIP 106686 / LMG 19005 / NCIMB 14063 / MR-1).